The sequence spans 75 residues: Putative snRNP Sm-like protein (75 aa).

Positions 4–75 (RPLDVIHRSL…NVLAISPTEE (72 aa)) constitute a Sm domain.

This sequence belongs to the snRNP Sm proteins family.

This chain is Putative snRNP Sm-like protein, found in Pyrococcus horikoshii (strain ATCC 700860 / DSM 12428 / JCM 9974 / NBRC 100139 / OT-3).